A 233-amino-acid chain; its full sequence is Orotidine 5'-phosphate decarboxylase (233 aa).

Residues Asp9, Lys31, 58–67 (DLKLHDIPNT), Thr120, Arg182, Gln191, Gly211, and Arg212 each bind substrate. Lys60 acts as the Proton donor in catalysis.

The protein belongs to the OMP decarboxylase family. Type 1 subfamily. Homodimer.

It catalyses the reaction orotidine 5'-phosphate + H(+) = UMP + CO2. The protein operates within pyrimidine metabolism; UMP biosynthesis via de novo pathway; UMP from orotate: step 2/2. In terms of biological role, catalyzes the decarboxylation of orotidine 5'-monophosphate (OMP) to uridine 5'-monophosphate (UMP). This chain is Orotidine 5'-phosphate decarboxylase, found in Listeria monocytogenes serotype 4a (strain HCC23).